The primary structure comprises 737 residues: FYVE, RhoGEF and PH domain-containing protein 3 (737 aa).

Residues 1–151 are disordered; sequence MESGGGSSTP…KADKDAGLAQ (151 aa). Positions 126-136 are enriched in acidic residues; sequence ADSDVGEEPDS. Position 128 is a phosphoserine (Ser-128). In terms of domain architecture, DH spans 157-341; it reads KLLHIAQELL…STAANHSNAA (185 aa). The PH 1 domain occupies 370-469; sequence ELIKEGQIQK…WIQIIQATIE (100 aa). Residues 487–533 are disordered; sequence QDEDPSLSPDMPITSTSPVEPVVTTEGGSGAAGLEPRKLSSKTRRDK. Positions 500-512 are enriched in low complexity; that stretch reads TSTSPVEPVVTTE. A compositionally biased stretch (basic and acidic residues) spans 521–533; that stretch reads EPRKLSSKTRRDK. The FYVE-type zinc finger occupies 532-588; it reads DKEKQSCKSCGETFNSITKRRHHCKLCGVVICGKCSEFKAENSRQSRVCRECFLTQP. Cys-538, Cys-541, Cys-555, Cys-558, Cys-563, Cys-566, Cys-580, and Cys-583 together coordinate Zn(2+). Disordered stretches follow at residues 589-620 and 713-737; these read VAPE…SLLC and AARG…AAAP. The region spanning 616-715 is the PH 2 domain; that stretch reads PSLLCGPLRL…WLETLSTAAR (100 aa).

It is found in the cytoplasm. The protein resides in the cytoskeleton. Functionally, promotes the formation of filopodia. May activate CDC42, a member of the Ras-like family of Rho- and Rac proteins, by exchanging bound GDP for free GTP. Plays a role in regulating the actin cytoskeleton and cell shape. This is FYVE, RhoGEF and PH domain-containing protein 3 (FGD3) from Pongo abelii (Sumatran orangutan).